Consider the following 2999-residue polypeptide: TPR and ankyrin repeat-containing protein 1 (2999 aa).

Residues 1-87 (MASTTAGRRW…QPRGSTDSAC (87 aa)) are disordered. A compositionally biased stretch (low complexity) spans 19–36 (RGPTPRSRAPGAKLSAPE). TPR repeat units follow at residues 144–177 (AMLLCNKSNAFYNLGKWNEAFLAAKECLQWDPTY) and 179–211 (KGYYRAGYSLLHLLQPYEAARMFFEGLRLLQRS). ANK repeat units follow at residues 297 to 327 (EKYVFIGFYEKLEQVPKLVQWLVSIGANIET), 328 to 361 (IGPNPLHALMRLCIQARESQLFRWVMDQKPEWKE), 369 to 405 (AGCTVLHVAAAHFPGYTSRRQTEDVQMLLSFGADPTL), 538 to 567 (SQDRPLLMCLRHEDFDLAFLLLTKGADPRS), 572 to 593 (EGDTPLHAALHIFLDINADIGF), and 621 to 654 (NGNTLMHLLFQKGMLKRTKKLIDLLVKFDINFNL). Disordered regions lie at residues 684 to 722 (RRKNRQDPAAHLGRLSRSSAPGHTSQLKSQTSFKSLPCG), 773 to 831 (MPLP…GASQ), 1151 to 1211 (LEVE…GCVP), and 1318 to 1344 (WEEDDEEVEADGNYNEEEKATETQTGD). Composition is skewed to polar residues over residues 699 to 717 (SRSSAPGHTSQLKSQTSFK) and 801 to 815 (TQRMGSSGCSGNNPV). Residues 1151–1164 (LEVEPGKEGPGREE) show a composition bias toward basic and acidic residues. The span at 1318–1327 (WEEDDEEVEA) shows a compositional bias: acidic residues. 2 TPR repeats span residues 1772 to 1805 (PYEWIIQGDYYAKHQCWKVAAKCYQKGDALEKEK) and 1866 to 1899 (LGKIRDAAYFYKRSQCFQDAFRCFEQIQEFDLAL).

In terms of tissue distribution, expressed only in the brain. Detected in the hippocampus, hypothalamus and cingulate gyrus.

This is TPR and ankyrin repeat-containing protein 1 (Trank1) from Mus musculus (Mouse).